The following is a 62-amino-acid chain: Large ribosomal subunit protein bL28 (62 aa).

It belongs to the bacterial ribosomal protein bL28 family.

The sequence is that of Large ribosomal subunit protein bL28 from Streptococcus agalactiae serotype Ia (strain ATCC 27591 / A909 / CDC SS700).